The chain runs to 119 residues: Large ribosomal subunit protein bL20 (119 aa).

This sequence belongs to the bacterial ribosomal protein bL20 family.

In terms of biological role, binds directly to 23S ribosomal RNA and is necessary for the in vitro assembly process of the 50S ribosomal subunit. It is not involved in the protein synthesizing functions of that subunit. In Streptococcus equi subsp. equi (strain 4047), this protein is Large ribosomal subunit protein bL20.